The sequence spans 879 residues: Leucine--tRNA ligase (879 aa).

A 'HIGH' region motif is present at residues 43-53 (PYPSGRIHMGH). The 'KMSKS' region signature appears at 636–640 (KMSKS). Residue K639 participates in ATP binding.

Belongs to the class-I aminoacyl-tRNA synthetase family.

The protein localises to the cytoplasm. The enzyme catalyses tRNA(Leu) + L-leucine + ATP = L-leucyl-tRNA(Leu) + AMP + diphosphate. This Afipia carboxidovorans (strain ATCC 49405 / DSM 1227 / KCTC 32145 / OM5) (Oligotropha carboxidovorans) protein is Leucine--tRNA ligase.